Reading from the N-terminus, the 250-residue chain is Golgi SNAP receptor complex member 1 (250 aa).

The residue at position 2 (alanine 2) is an N-acetylalanine. The Cytoplasmic segment spans residues 2 to 229; that stretch reads AAGTSSYWED…QRINLRKRRD (228 aa). A coiled-coil region spans residues 9-30; sequence WEDLRKQARQLENELDLKLVSF. The interval 38-59 is disordered; sequence SHSSTRDGRRDRYSSDTTPLLN. Positions 41-51 are enriched in basic and acidic residues; the sequence is STRDGRRDRYS. The stretch at 68–95 forms a coiled coil; it reads ETMAIEIEQLLARLTGVNDKMAEYTNSA. At serine 141 the chain carries Phosphoserine. The chain crosses the membrane as a helical; Anchor for type IV membrane protein span at residues 230–250; the sequence is SLILGGVIGICTILLLLYAFH.

Belongs to the GOSR1 family. As to quaternary structure, component of several multiprotein Golgi SNARE complexes. Identified in a SNARE complex with BET1, STX5 and YKT6, in a SNARE complex with BET1L, STX5 and YKT6, in a SNARE complex with STX5, GOSR2, SEC22B and BET1, and in complex with STX5 and COG3. Interacts with GABARAPL2.

It is found in the golgi apparatus membrane. Its function is as follows. Involved in transport from the ER to the Golgi apparatus as well as in intra-Golgi transport. It belongs to a super-family of proteins called t-SNAREs or soluble NSF (N-ethylmaleimide-sensitive factor) attachment protein receptor. May play a protective role against hydrogen peroxide induced cytotoxicity under glutathione depleted conditions in neuronal cells by regulating the intracellular ROS levels via inhibition of p38 MAPK (MAPK11, MAPK12, MAPK13 and MAPK14). Participates in docking and fusion stage of ER to cis-Golgi transport. Plays an important physiological role in VLDL-transport vesicle-Golgi fusion and thus in VLDL delivery to the hepatic cis-Golgi. In Homo sapiens (Human), this protein is Golgi SNAP receptor complex member 1 (GOSR1).